We begin with the raw amino-acid sequence, 225 residues long: Chromosome partition protein MukE (225 aa).

The segment at 197–225 is disordered; the sequence is RDGEAMPIENHLQLNDETEENQPDSGEEE. The span at 212–225 shows a compositional bias: acidic residues; it reads DETEENQPDSGEEE.

It belongs to the MukE family. In terms of assembly, interacts, and probably forms a ternary complex, with MukF and MukB. The complex formation is stimulated by calcium or magnesium.

It localises to the cytoplasm. Its subcellular location is the nucleoid. Its function is as follows. Involved in chromosome condensation, segregation and cell cycle progression. May participate in facilitating chromosome segregation by condensation DNA from both sides of a centrally located replisome during cell division. Probably acts via its interaction with MukB and MukF. The protein is Chromosome partition protein MukE of Escherichia coli O157:H7.